A 130-amino-acid chain; its full sequence is Small ribosomal subunit protein uS9 (130 aa).

Basic and acidic residues predominate over residues 101 to 110 (AGFLTRDPRM). The segment at 101-130 (AGFLTRDPRMKERKKYGLKKARRAPQFSKR) is disordered. Residues 111-130 (KERKKYGLKKARRAPQFSKR) are compositionally biased toward basic residues.

The protein belongs to the universal ribosomal protein uS9 family.

This chain is Small ribosomal subunit protein uS9, found in Clostridium tetani (strain Massachusetts / E88).